The following is a 120-amino-acid chain: Large ribosomal subunit protein eL8 (120 aa).

Belongs to the eukaryotic ribosomal protein eL8 family. In terms of assembly, part of the 50S ribosomal subunit. Probably part of the RNase P complex.

It is found in the cytoplasm. In terms of biological role, multifunctional RNA-binding protein that recognizes the K-turn motif in ribosomal RNA, the RNA component of RNase P, box H/ACA, box C/D and box C'/D' sRNAs. The protein is Large ribosomal subunit protein eL8 of Halobacterium salinarum (strain ATCC 29341 / DSM 671 / R1).